Here is a 120-residue protein sequence, read N- to C-terminus: NAD(P)H-quinone oxidoreductase subunit 3, chloroplastic (120 aa).

3 helical membrane passes run 7–27 (YDTF…AFSI), 64–84 (MFAL…PWAM), and 88–108 (ILGL…IVGL).

This sequence belongs to the complex I subunit 3 family. NDH is composed of at least 16 different subunits, 5 of which are encoded in the nucleus.

It is found in the plastid. Its subcellular location is the chloroplast thylakoid membrane. It catalyses the reaction a plastoquinone + NADH + (n+1) H(+)(in) = a plastoquinol + NAD(+) + n H(+)(out). The catalysed reaction is a plastoquinone + NADPH + (n+1) H(+)(in) = a plastoquinol + NADP(+) + n H(+)(out). In terms of biological role, NDH shuttles electrons from NAD(P)H:plastoquinone, via FMN and iron-sulfur (Fe-S) centers, to quinones in the photosynthetic chain and possibly in a chloroplast respiratory chain. The immediate electron acceptor for the enzyme in this species is believed to be plastoquinone. Couples the redox reaction to proton translocation, and thus conserves the redox energy in a proton gradient. The polypeptide is NAD(P)H-quinone oxidoreductase subunit 3, chloroplastic (Cryptomeria japonica (Japanese cedar)).